The following is a 203-amino-acid chain: Glycerol-3-phosphate acyltransferase (203 aa).

A run of 4 helical transmembrane segments spans residues 3-23, 75-95, 113-133, and 156-176; these read LASA…AILV, LGLE…GHLF, VILG…LIVA, and LLTG…LIYW.

Belongs to the PlsY family. In terms of assembly, probably interacts with PlsX.

It localises to the cell inner membrane. The enzyme catalyses an acyl phosphate + sn-glycerol 3-phosphate = a 1-acyl-sn-glycero-3-phosphate + phosphate. Its pathway is lipid metabolism; phospholipid metabolism. In terms of biological role, catalyzes the transfer of an acyl group from acyl-phosphate (acyl-PO(4)) to glycerol-3-phosphate (G3P) to form lysophosphatidic acid (LPA). This enzyme utilizes acyl-phosphate as fatty acyl donor, but not acyl-CoA or acyl-ACP. The protein is Glycerol-3-phosphate acyltransferase of Thioalkalivibrio sulfidiphilus (strain HL-EbGR7).